The primary structure comprises 332 residues: MSLKEKLIENVHKEEHPQAHNKITVVGVGAVGMACAISILMKDLADELALVDVVEDKLKGEMLDLQHGSLFLRTPKIVSGKDYAVTAHSKLVIITAGARQQEGEFRLNLVQRNVNIFKFIIPNVVKYSPHCKLLVVSNPVDILTYVAWKISGFPKHRVIGSGCNLDSARFRHLLGERLGIHPLSCHSWIVGEHGDSSVPVWSGVNVAGVCLKELHPELGTDGDKENWKEVHKQVVDSAYEVIKLKGYTSWAIGLSVADLAETIMKNLRRVHPISTMVKGMHGVKDDVFLSVPCVLGSSGITDVIKMTLKSEEEDKLRKSADTLWGIQKELQF.

Residues Gly29–Lys57 and Arg99 each bind NAD(+). The substrate site is built by Arg106, Asn138, and Arg169. Position 138 (Asn138) interacts with NAD(+). Residue His193 is the Proton acceptor of the active site. A substrate-binding site is contributed by Thr248.

This sequence belongs to the LDH/MDH superfamily. LDH family. Homotetramer.

The protein resides in the cytoplasm. The catalysed reaction is (S)-lactate + NAD(+) = pyruvate + NADH + H(+). It participates in fermentation; pyruvate fermentation to lactate; (S)-lactate from pyruvate: step 1/1. Interconverts simultaneously and stereospecifically pyruvate and lactate with concomitant interconversion of NADH and NAD(+). This is L-lactate dehydrogenase A chain (LDHA) from Python regius (Ball python).